The primary structure comprises 377 residues: MSQPSLWKDSHYFIMWASCCNWFCLDGQPEEAPPPQGARTQAYSNPGYSSFPSPTGSEPSCKACGVHFASTTRKQTCLDCKKNFCMTCSSQEGNGPRLCLLCLRFRATAFQREELMKMKVKDLRDYLSLHDISTEMCREKEELVFLVLGQQPVISEADRTRVPHLPQAFPEQQAFLTQPQTSTVPPTSPGLPSSPAQVTSVPLAQDQETQQAVGHVSQDHEEPIFPESTARVPTEDETQSVDSEDSFVPGRRASLSDLTHLEDIEGLTVRQLKEILARNFVNYKGCCEKWELMERVTRLYKDQKGLQHLVSGNEDQNGGAVPSGLEENLCKICMDSPIDCVLLECGHMVTCTKCGKRMNECPICRQYVIRAVHVFRS.

The FYVE-type zinc-finger motif lies at 55 to 107 (TGSEPSCKACGVHFASTTRKQTCLDCKKNFCMTCSSQEGNGPRLCLLCLRFRA). Positions 115–134 (LMKMKVKDLRDYLSLHDIST) constitute an SAP 1 domain. The segment at 176-249 (LTQPQTSTVP…SVDSEDSFVP (74 aa)) is disordered. Polar residues predominate over residues 190–212 (GLPSSPAQVTSVPLAQDQETQQA). A compositionally biased stretch (acidic residues) spans 235–245 (EDETQSVDSED). Phosphoserine is present on residues Ser240, Ser243, Ser246, and Ser254. An SAP 2 domain is found at 264 to 278 (IEGLTVRQLKEILAR). The RING-type zinc finger occupies 330–365 (CKICMDSPIDCVLLECGHMVTCTKCGKRMNECPICR).

Interacts with CASP8 and CASP10. Interacts with RIPK1 (via protein kinase domain); involved in RIPK1 ubiquitination. Interacts with PRR5L. Interacts (via RING-type zinc finger) with p53/TP53; involved in p53/TP53 ubiquitination. Interacts (via RING-type zinc finger) with MDM2; the interaction stabilizes MDM2. Autoubiquitinated. In terms of processing, palmitoylated. Post-translationally, undergoes caspase-mediated cleavage upon death-receptor activation, by TNFSF10 for instance. May be mediated by the caspases CASP8 and CASP10 in a negative feedback loop. Ubiquitous. Detected in heart, brain, spleen, lung, liver, skeletal muscle, kidney, testis, thymus, whole embryo and embryonic stem cells.

It is found in the cytoplasm. The protein localises to the cytosol. The protein resides in the cell membrane. It localises to the recycling endosome membrane. The enzyme catalyses S-ubiquitinyl-[E2 ubiquitin-conjugating enzyme]-L-cysteine + [acceptor protein]-L-lysine = [E2 ubiquitin-conjugating enzyme]-L-cysteine + N(6)-ubiquitinyl-[acceptor protein]-L-lysine.. It functions in the pathway protein modification; protein ubiquitination. Its function is as follows. E3 ubiquitin-protein ligase that regulates several biological processes through the ubiquitin-mediated proteasomal degradation of various target proteins. Mediates 'Lys-48'-linked polyubiquitination of PRR5L and its subsequent proteasomal degradation thereby indirectly regulating cell migration through the mTORC2 complex. Also ubiquitinates the caspases CASP8 and CASP10, promoting their proteasomal degradation, to negatively regulate apoptosis downstream of death domain receptors. Also negatively regulates the tumor necrosis factor-mediated signaling pathway through targeting of RIPK1 to ubiquitin-mediated proteasomal degradation. Negatively regulates p53/TP53 through its direct ubiquitination and targeting to proteasomal degradation. Indirectly, may also negatively regulate p53/TP53 through ubiquitination and degradation of SFN. May also play a role in endocytic recycling. The protein is E3 ubiquitin-protein ligase rififylin of Mus musculus (Mouse).